The following is a 496-amino-acid chain: Angiopoietin-2 (496 aa).

The signal sequence occupies residues 1–18 (MWQIIFLTFGWDLVLASA). 6 N-linked (GlcNAc...) asparagine glycosylation sites follow: N89, N119, N133, N151, N240, and N304. A coiled-coil region spans residues 159 to 256 (QLLQHSISTN…QQHDLMETVN (98 aa)). The Fibrinogen C-terminal domain maps to 275 to 495 (KEEQTTFRDC…ATTMMIRPAD (221 aa)). Residues C284 and C313 are joined by a disulfide bond. Ca(2+) is bound by residues D429, D431, C433, and C435. 2 disulfides stabilise this stretch: C433/C435 and C437/C450.

As to quaternary structure, interacts with TEK/TIE2, competing for the same binding site as ANGPT1. Interacts with ITGA5. Interacts with SVEP1/polydom. Interacts with THBD; this interaction significantly inhibits the generation of activated PC and TAFIa/CPB2 by the thrombin/thrombomodulin complex. As to expression, expressed in the ovary, uterus and placenta.

It is found in the secreted. Binds to TEK/TIE2, competing for the ANGPT1 binding site, and modulating ANGPT1 signaling. Can induce tyrosine phosphorylation of TEK/TIE2 in the absence of ANGPT1. In the absence of angiogenic inducers, such as VEGF, ANGPT2-mediated loosening of cell-matrix contacts may induce endothelial cell apoptosis with consequent vascular regression. In concert with VEGF, it may facilitate endothelial cell migration and proliferation, thus serving as a permissive angiogenic signal. Involved in the regulation of lymphangiogenesis. The sequence is that of Angiopoietin-2 (Angpt2) from Mus musculus (Mouse).